A 293-amino-acid polypeptide reads, in one-letter code: Ribosomal RNA small subunit methyltransferase A (293 aa).

Residues Asn-36, Leu-38, Gly-63, Glu-84, Asp-111, and Asn-132 each coordinate S-adenosyl-L-methionine.

Belongs to the class I-like SAM-binding methyltransferase superfamily. rRNA adenine N(6)-methyltransferase family. RsmA subfamily.

The protein resides in the cytoplasm. The enzyme catalyses adenosine(1518)/adenosine(1519) in 16S rRNA + 4 S-adenosyl-L-methionine = N(6)-dimethyladenosine(1518)/N(6)-dimethyladenosine(1519) in 16S rRNA + 4 S-adenosyl-L-homocysteine + 4 H(+). Functionally, specifically dimethylates two adjacent adenosines (A1518 and A1519) in the loop of a conserved hairpin near the 3'-end of 16S rRNA in the 30S particle. May play a critical role in biogenesis of 30S subunits. The polypeptide is Ribosomal RNA small subunit methyltransferase A (Treponema denticola (strain ATCC 35405 / DSM 14222 / CIP 103919 / JCM 8153 / KCTC 15104)).